Reading from the N-terminus, the 223-residue chain is DnaJ homolog subfamily B member 9 (223 aa).

The signal sequence occupies residues 1-23; the sequence is MATPQSIFIFAICILMITELILA. Residues 26–90 enclose the J domain; the sequence is SYYDILGVPK…NRRKEYDTLG (65 aa). The tract at residues 91 to 223 is divergent targeting domain; the sequence is HSAFTNGKGQ…VTTYTDCSGQ (133 aa). Ser133 carries the phosphoserine modification.

Interacts with HSPA5/BiP; interaction is direct. Interacts with ERN1/IRE1 (via the luminal region). Interacts with DERL1.

It is found in the endoplasmic reticulum lumen. In terms of biological role, co-chaperone for Hsp70 protein HSPA5/BiP that acts as a key repressor of the ERN1/IRE1-mediated unfolded protein response (UPR). J domain-containing co-chaperones stimulate the ATPase activity of Hsp70 proteins and are required for efficient substrate recognition by Hsp70 proteins. In the unstressed endoplasmic reticulum, interacts with the luminal region of ERN1/IRE1 and selectively recruits HSPA5/BiP: HSPA5/BiP disrupts the dimerization of the active ERN1/IRE1 luminal region, thereby inactivating ERN1/IRE1. Also involved in endoplasmic reticulum-associated degradation (ERAD) of misfolded proteins. Required for survival of B-cell progenitors and normal antibody production. This is DnaJ homolog subfamily B member 9 from Pongo abelii (Sumatran orangutan).